The chain runs to 334 residues: HTH-type transcriptional repressor PurR (334 aa).

The HTH lacI-type domain maps to 2–56 (ATIKDVAKMAGVSTTTVSHVINKTRFVAAETEKLVLQAIQELNYSPSAVARSLKV). The H-T-H motif DNA-binding region spans 4–23 (IKDVAKMAGVSTTTVSHVIN). The DNA-binding element occupies 48-56 (SAVARSLKV). Hypoxanthine contacts are provided by Y73, K189, T191, F220, and D274.

Homodimer.

It participates in purine metabolism; purine nucleotide biosynthesis [regulation]. Its function is as follows. Is the main repressor of the genes involved in the de novo synthesis of purine nucleotides, regulating purB, purC, purEK, purF, purHD, purL, purMN and guaBA expression. PurR is allosterically activated to bind its cognate DNA by binding the purine corepressors, hypoxanthine or guanine, thereby effecting transcription repression. This is HTH-type transcriptional repressor PurR from Pasteurella multocida (strain Pm70).